The following is a 37-amino-acid chain: Large ribosomal subunit protein bL36c (37 aa).

It belongs to the bacterial ribosomal protein bL36 family.

The protein localises to the plastid. It localises to the chloroplast. This is Large ribosomal subunit protein bL36c from Populus alba (White poplar).